The primary structure comprises 221 residues: Putative hemin import ATP-binding protein HrtA (221 aa).

An ABC transporter domain is found at 3 to 221 (LVVEDIVKNF…IELEDGKITD (219 aa)). 39–46 (GASGSGKT) is a binding site for ATP.

Belongs to the ABC transporter superfamily. HrtA family. As to quaternary structure, the complex is composed of two ATP-binding proteins (HrtA), two transmembrane proteins (HrtB) and a solute-binding protein.

The protein resides in the cell membrane. Functionally, part of the ABC transporter complex hrt involved in hemin import. Responsible for energy coupling to the transport system. The sequence is that of Putative hemin import ATP-binding protein HrtA (hrtA) from Staphylococcus aureus (strain USA300).